A 432-amino-acid chain; its full sequence is Enolase (432 aa).

Q164 contacts (2R)-2-phosphoglycerate. The Proton donor role is filled by E206. Mg(2+) is bound by residues D243, E289, and D316. Residues K341, R370, S371, and K392 each contribute to the (2R)-2-phosphoglycerate site. K341 acts as the Proton acceptor in catalysis.

Belongs to the enolase family. Mg(2+) serves as cofactor.

The protein resides in the cytoplasm. It localises to the secreted. The protein localises to the cell surface. It catalyses the reaction (2R)-2-phosphoglycerate = phosphoenolpyruvate + H2O. It functions in the pathway carbohydrate degradation; glycolysis; pyruvate from D-glyceraldehyde 3-phosphate: step 4/5. Functionally, catalyzes the reversible conversion of 2-phosphoglycerate (2-PG) into phosphoenolpyruvate (PEP). It is essential for the degradation of carbohydrates via glycolysis. This Borrelia duttonii (strain Ly) protein is Enolase.